Reading from the N-terminus, the 456-residue chain is Equilibrative nucleoside transporter 2 (456 aa).

The helical transmembrane segment at 13–33 (LVGISFFILGLGTLLPWNFFI) threads the bilayer. 2 N-linked (GlcNAc...) asparagine glycosylation sites follow: asparagine 48 and asparagine 57. 5 helical membrane-spanning segments follow: residues 70-90 (WVTL…SFLY), 99-119 (ILGS…LVKV), 124-144 (GPFF…SAVL), 162-182 (LFLS…LLSM), and 193-213 (LGYF…YLSL). A glycan (N-linked (GlcNAc...) asparagine) is linked at asparagine 225. The residue at position 252 (serine 252) is a Phosphoserine. 5 helical membrane-spanning segments follow: residues 291-311 (WLTA…FPAI), 324-344 (WSQF…DWLG), 360-380 (LLPL…LCHV), 386-406 (LPIL…FAVS), and 432-452 (ALMT…SFLF).

Belongs to the SLC29A/ENT transporter (TC 2.A.57) family. In terms of processing, glycosylated. In terms of tissue distribution, highly expressed in skeletal muscle. Expressed in liver, lung, placenta, brain, heart, kidney and ovarian tissues. Expressed in testis at the blood-brain-barrier.

The protein localises to the apical cell membrane. It localises to the basolateral cell membrane. It carries out the reaction inosine(in) = inosine(out). The enzyme catalyses adenosine(in) = adenosine(out). The catalysed reaction is uridine(out) = uridine(in). It catalyses the reaction thymidine(in) = thymidine(out). It carries out the reaction hypoxanthine(out) = hypoxanthine(in). The enzyme catalyses adenine(out) = adenine(in). The catalysed reaction is cytidine(in) = cytidine(out). It catalyses the reaction thymine(out) = thymine(in). It carries out the reaction uracil(in) = uracil(out). The enzyme catalyses guanine(out) = guanine(in). The catalysed reaction is guanosine(in) = guanosine(out). Functionally, bidirectional uniporter involved in the facilitative transport of nucleosides and nucleobases, and contributes to maintaining their cellular homeostasis. Functions as a Na(+)-independent, passive transporter. Involved in the transport of nucleosides such as inosine, adenosine, uridine, thymidine, cytidine and guanosine. Also able to transport purine nucleobases (hypoxanthine, adenine, guanine) and pyrimidine nucleobases (thymine, uracil). Involved in nucleoside transport at basolateral membrane of kidney cells, allowing liver absorption of nucleoside metabolites. Mediates apical nucleoside uptake into Sertoli cells, thereby regulating the transport of nucleosides in testis across the blood-testis-barrier. Mediates both the influx and efflux of hypoxanthine in skeletal muscle microvascular endothelial cells to control the amount of intracellular hypoxanthine available for xanthine oxidase-mediated ROS production. Non functional nucleoside transporter protein for adenosine or thymidine transport. Does not express on cell membrane. This Homo sapiens (Human) protein is Equilibrative nucleoside transporter 2.